The following is a 98-amino-acid chain: Signal peptidase complex subunit 1 (98 aa).

Over 1-18 the chain is Cytoplasmic; that stretch reads MLDIQTHMDFAGQGKAER. The helical transmembrane segment at 19 to 38 threads the bilayer; sequence WSRFIITFFGIVGLVYGAFV. The Lumenal portion of the chain corresponds to 39-42; the sequence is QQFS. A helical transmembrane segment spans residues 43-65; that stretch reads QTVYILGAGFVLSSLITIPPWPL. The Cytoplasmic portion of the chain corresponds to 66–98; sequence YRRNALKWQKPIDTDAKSSSSESGDEGKKKKKQ. The disordered stretch occupies residues 78–98; the sequence is DTDAKSSSSESGDEGKKKKKQ. A phosphoserine mark is found at S84, S85, S86, and S88.

It belongs to the SPCS1 family. In terms of assembly, component of the signal peptidase complex (SPC) composed of a catalytic subunit twr/SEC11 and three accessory subunits Spase12/SPCS1, Spase25/SPCS2 and Spase22-23/SPCS3. The complex induces a local thinning of the ER membrane which is used to measure the length of the signal peptide (SP) h-region of protein substrates. This ensures the selectivity of the complex towards h-regions shorter than 18-20 amino acids.

Its subcellular location is the endoplasmic reticulum membrane. Functionally, component of the signal peptidase complex (SPC) which catalyzes the cleavage of N-terminal signal sequences from nascent proteins as they are translocated into the lumen of the endoplasmic reticulum. Dispensable for SPC enzymatic activity. In terms of biological role, (Microbial infection) Plays an important role in infection by flaviviruses such as West Nile virus and Dengue virus type 2. In Drosophila melanogaster (Fruit fly), this protein is Signal peptidase complex subunit 1 (Spase12).